Here is a 76-residue protein sequence, read N- to C-terminus: MDTFESVKAVVVEQLSVDANEVKPESRFIEDLNADSLDVVELVMALEEKFSIEIPDEEAEKIKTVKDVVAYIEANK.

A Carrier domain is found at 1 to 76; it reads MDTFESVKAV…DVVAYIEANK (76 aa). At serine 36 the chain carries O-(pantetheine 4'-phosphoryl)serine.

It belongs to the acyl carrier protein (ACP) family. In terms of processing, 4'-phosphopantetheine is transferred from CoA to a specific serine of apo-ACP by AcpS. This modification is essential for activity because fatty acids are bound in thioester linkage to the sulfhydryl of the prosthetic group.

Its subcellular location is the cytoplasm. The protein operates within lipid metabolism; fatty acid biosynthesis. Carrier of the growing fatty acid chain in fatty acid biosynthesis. This chain is Acyl carrier protein, found in Helicobacter hepaticus (strain ATCC 51449 / 3B1).